A 152-amino-acid chain; its full sequence is Xanthine-guanine phosphoribosyltransferase (152 aa).

5-phospho-alpha-D-ribose 1-diphosphate-binding positions include 37-38 (RG) and 88-96 (DDLVDTGNT). Mg(2+) is bound at residue Asp-89. Positions 92 and 135 each coordinate guanine. Asp-92 and Ile-135 together coordinate xanthine. GMP is bound by residues 92 to 96 (DTGNT) and 134 to 135 (WI).

Belongs to the purine/pyrimidine phosphoribosyltransferase family. XGPT subfamily. In terms of assembly, homotetramer. It depends on Mg(2+) as a cofactor.

It localises to the cell inner membrane. It catalyses the reaction GMP + diphosphate = guanine + 5-phospho-alpha-D-ribose 1-diphosphate. It carries out the reaction XMP + diphosphate = xanthine + 5-phospho-alpha-D-ribose 1-diphosphate. The catalysed reaction is IMP + diphosphate = hypoxanthine + 5-phospho-alpha-D-ribose 1-diphosphate. The protein operates within purine metabolism; GMP biosynthesis via salvage pathway; GMP from guanine: step 1/1. It functions in the pathway purine metabolism; XMP biosynthesis via salvage pathway; XMP from xanthine: step 1/1. Purine salvage pathway enzyme that catalyzes the transfer of the ribosyl-5-phosphate group from 5-phospho-alpha-D-ribose 1-diphosphate (PRPP) to the N9 position of the 6-oxopurines guanine and xanthine to form the corresponding ribonucleotides GMP (guanosine 5'-monophosphate) and XMP (xanthosine 5'-monophosphate), with the release of PPi. To a lesser extent, also acts on hypoxanthine. This Mannheimia succiniciproducens (strain KCTC 0769BP / MBEL55E) protein is Xanthine-guanine phosphoribosyltransferase.